The primary structure comprises 198 residues: Transmembrane gamma-carboxyglutamic acid protein 2 (198 aa).

Positions 1–17 are cleaved as a signal peptide; that stretch reads MRGRPSLLLVYMGLATC. The propeptide occupies 18–51; the sequence is LDTSPHREQNQVLDIFLDAPEAQSFLVGRRRFPR. Residues 52–98 enclose the Gla domain; that stretch reads ANHWDLELLTPGNLERECLEERCSWEEAREYFEDNTLTERFWESYTY. The Extracellular portion of the chain corresponds to 52 to 111; the sequence is ANHWDLELLTPGNLERECLEERCSWEEAREYFEDNTLTERFWESYTYNGKGGRGRVDVAG. Cys-69 and Cys-74 are disulfide-bonded. Position 72 is a 4-carboxyglutamate (Glu-72). Residues 112-132 form a helical membrane-spanning segment; it reads LAVGLTSGILLIVLAGLGAFW. Topologically, residues 133-198 are cytoplasmic; it reads YLHYRRRRLR…PPYSSLRRPH (66 aa). Residues 156 to 198 form a disordered region; that stretch reads PLSPQTPQSPPLPPGLPTYEQALAASGVHDAPPPPYSSLRRPH. The segment covering 162-171 has biased composition (pro residues); the sequence is PQSPPLPPGL. Positions 171–174 match the LPXY motif; mediates binding to WW domain-containing proteins motif; that stretch reads LPTY. Residues 188 to 191 carry the PPXY motif; mediates binding to WW domain-containing proteins motif; sequence PPPY.

As to quaternary structure, interacts with NEDD4. Interacts with transcriptional coactivator YAP1. Post-translationally, gamma-carboxyglutamate residues are formed by vitamin K dependent carboxylation. These residues are essential for the binding of calcium.

Its subcellular location is the cell membrane. This chain is Transmembrane gamma-carboxyglutamic acid protein 2 (Prrg2), found in Mus musculus (Mouse).